Consider the following 883-residue polypeptide: Glutamate receptor 2 (883 aa).

A signal peptide spans 1–21 (MQKIMHISVLLSPVLWGLIFG). At 22-543 (VSSNSIQIGG…GVFSFLDPLA (522 aa)) the chain is on the extracellular side. An intrachain disulfide couples C78 to C330. N-linked (GlcNAc...) asparagine glycans are attached at residues N256, N370, N406, and N413. L-glutamate is bound by residues P499, T501, and R506. Residues 544 to 564 (YEIWMCIVFAYIGVSVVLFLV) form a helical membrane-spanning segment. Topologically, residues 565-591 (SRFSPYEWHTEEFEDGRETQSSESTNE) are cytoplasmic. The helical; Pore-forming intramembrane region spans 592–607 (FGIFNSLWFSLGAFMQ). The stretch at 608 to 610 (QGC) is an intramembrane region. C610 carries the S-palmitoyl cysteine lipid modification. At 611–616 (DISPRS) the chain is on the cytoplasmic side. Residues 617 to 637 (LSGRIVGGVWWFFTLIIISSY) form a helical membrane-spanning segment. Residues 638–812 (TANLAAFLTV…EKTSALSLSN (175 aa)) lie on the Extracellular side of the membrane. S675 and T676 together coordinate L-glutamate. S683 carries the post-translational modification Phosphoserine; by PKC. S717 is subject to Phosphoserine; by PKG. Residue E726 participates in L-glutamate binding. A disulfide bond links C739 and C794. Residues 813–833 (VAGVFYILVGGLGLAMLVALI) form a helical membrane-spanning segment. At 834 to 883 (EFCYKSRAEAKRMKVAKNPQNINPSSSQNSQNFATYKEGYNVYGIESVKI) the chain is on the cytoplasmic side. The S-palmitoyl cysteine moiety is linked to residue C836. S860 and S863 each carry phosphoserine. The segment at 867–877 (ATYKEGYNVYG) is required for interaction with IQSEC1. A Phosphotyrosine modification is found at Y876. Residue S880 is modified to Phosphoserine.

The protein belongs to the glutamate-gated ion channel (TC 1.A.10.1) family. GRIA2 subfamily. As to quaternary structure, homotetramer or heterotetramer of pore-forming glutamate receptor subunits. Tetramers may be formed by the dimerization of dimers. May interact with MPP4. Forms a ternary complex with GRIP1 and CSPG4. Interacts with ATAD1 in an ATP-dependent manner. ATAD1-catalyzed ATP hydrolysis disrupts binding to ATAD1 and to GRIP1 and leads to AMPAR complex disassembly. Interacts with GRIP2. Interacts with GRIP1. Interacts with NSF via its C-terminus. Interacts with CACNG2, PICK1 and GRIP2. Interacts with GRIA1 and SYNDIG1. Part of a complex containing GRIA2, NSF and NAPA and/or NAPB. Interacts with SNX27 (via PDZ domain); the interaction is required for recycling to the plasma membrane when endocytosed and prevent degradation in lysosomes. Interacts with LRFN1. Found in a complex with GRIA1, GRIA3, GRIA4, CNIH2, CNIH3, CACNG2, CACNG3, CACNG4, CACNG5, CACNG7 and CACNG8. Interacts with CACNG5. Interacts with OLFM2. Interacts with AP4B1, AP4E1 and AP4M1; probably indirect it mediates the somatodendritic localization of GRIA2 in neurons. Forms a complex with GRIP1, NSG1 and STX12; controls the intracellular fate of AMPAR and the endosomal sorting of the GRIA2 subunit toward recycling and membrane targeting. Interacts with IQSEC1; the interaction is required for ARF6 activation. Interacts (heterotetramer form) with CNIH2 and CNIH3; this interaction promotes expression at the plasma membrane and extensively modulates their gating properties by slowing deactivation and desensitization kinetics. Post-translationally, palmitoylated. Depalmitoylated upon L-glutamate stimulation. Cys-610 palmitoylation leads to Golgi retention and decreased cell surface expression. In contrast, Cys-836 palmitoylation does not affect cell surface expression but regulates stimulation-dependent endocytosis. In terms of processing, phosphorylation at Tyr-876 is required for interaction with IQSEC1 and ARF6 activation, which in turn triggers AMPAR internalization for persistent synaptic depression. Ubiquitinated by RNF167, leading to its degradation. Post-translationally, N-glycosylated. In terms of tissue distribution, detected in forebrain. Detected in dendrites of neuronal cells. Expressed in the pyramidal cell layers of CA1 and CA3 and in the granule cell layer of the dentate gyrus.

The protein localises to the cell membrane. The protein resides in the postsynaptic cell membrane. It localises to the postsynaptic density membrane. It catalyses the reaction Ca(2+)(in) = Ca(2+)(out). It carries out the reaction Na(+)(in) = Na(+)(out). Its function is as follows. Ionotropic glutamate receptor that functions as a ligand-gated cation channel, gated by L-glutamate and glutamatergic agonists such as alpha-amino-3-hydroxy-5-methyl-4-isoxazolepropionic acid (AMPA), quisqualic acid, and kainic acid. L-glutamate acts as an excitatory neurotransmitter at many synapses in the central nervous system and plays an important role in fast excitatory synaptic transmission. Binding of the excitatory neurotransmitter L-glutamate induces a conformation change, leading to the opening of the cation channel, and thereby converts the chemical signal to an electrical impulse upon entry of monovalent and divalent cations such as sodium and calcium. The receptor then desensitizes rapidly and enters in a transient inactive state, characterized by the presence of bound agonist. In the presence of CACNG4 or CACNG7 or CACNG8, shows resensitization which is characterized by a delayed accumulation of current flux upon continued application of L-glutamate. Through complex formation with NSG1, GRIP1 and STX12 controls the intracellular fate of AMPAR and the endosomal sorting of the GRIA2 subunit toward recycling and membrane targeting. The polypeptide is Glutamate receptor 2 (Rattus norvegicus (Rat)).